We begin with the raw amino-acid sequence, 116 residues long: MKQNLLAVETWYMLILSFRFLFFSRNYNLILCDYLVNTQTVNRVVMAIRSSKRVGKPLFLRYIVMISLKRLPKKCRCGGSPASLPEKYVIMSNKLPYYTNTELDYVIHLDQIDRDL.

A helical membrane pass occupies residues 5-23; it reads LLAVETWYMLILSFRFLFF.

Its subcellular location is the membrane. This is an uncharacterized protein from Saccharomyces cerevisiae (strain ATCC 204508 / S288c) (Baker's yeast).